A 328-amino-acid chain; its full sequence is MIFSILEHILTHISFSVVSIVLIIYFLTLLVNLDEIIGFFNSSDKGIIITFFGITGLLLTRWIFSGHFPLSNLYESLIFLSWAFSIIHMVSYFNKKQQNHLNAITAPSAIFIQGFATSGLLNKMPQSAILVPALQSQWLMMHVSMMILGYGALLCGSLLSIALLVITFRKVGPTFWKKNIKKNVLLNELFSFDVLYYINERNSILLQQNINFSFSRNYYRYQLIQQLDYWSFRIISLGFIFLTVGILSGAVWANETWGSYWNWDPKETWAFITWTIFAIYLHIKTNRNVRGINSAIVASIGFLLIWICYFGVNLLGIGLHSYGSFTSN.

8 helical membrane-spanning segments follow: residues 13–33, 46–66, 73–93, 101–121, 146–166, 234–254, 263–283, and 295–315; these read ISFS…LVNL, GIII…IFSG, LYES…VSYF, LNAI…SGLL, MILG…LLVI, IISL…VWAN, WDPK…YLHI, and AIVA…VNLL.

This sequence belongs to the CcmF/CycK/Ccl1/NrfE/CcsA family. May interact with Ccs1.

The protein localises to the plastid. The protein resides in the chloroplast thylakoid membrane. Required during biogenesis of c-type cytochromes (cytochrome c6 and cytochrome f) at the step of heme attachment. The protein is Cytochrome c biogenesis protein CcsA of Olimarabidopsis pumila (Dwarf rocket).